The following is a 996-amino-acid chain: KK-1 biosynthesis cluster protein D (996 aa).

Disordered stretches follow at residues His-307 to Asp-333, Glu-425 to Leu-449, Ala-489 to Ala-556, and Ser-571 to Ser-602. Composition is skewed to polar residues over residues Pro-318–Gln-329 and Asn-428–Gln-439. 2 stretches are compositionally biased toward basic and acidic residues: residues Ser-440–Leu-449 and Arg-500–Ala-527. Positions Thr-572–Arg-590 are enriched in polar residues.

The protein operates within secondary metabolite biosynthesis. In terms of biological role, part of the gene cluster that mediates the biosynthesis of KK-1, a novel cyclic depsipeptide with 10 residues which is a promising active compound with high activity against many plant pathogens, especially Botrytis cinerea. The role of kk1D in KK-1 biosynthesis has still to be determined. The nonribosomal peptide synthetase (NRPS) kk1B catalyzes the elongation and cyclization of the decapeptide chain composed of 1 D-lactic acid residue (D-Lac), 1 pipecolic acid residue (Pip), 1 aspartic acid residue (Asp), 1 isoleucine residue (Ile), 1 glycine residue (Gly), 1 tyrosine residue (Tyr) and 4 valine residues (Val). The Asp, Ile and 3 Val residues are N-methylated by the 5 methyltransferase domains from the NRPS (found in modules 3, 5, 6, 7 and 9), whereas the Tyr residue is O-methylated by the cluster encoded O-methyltransferase kk1A. The thioesterase kk1J is likely to be involved in the corrective mechanism of peptide chain synthesis. The D-lactate dehydrogenase kk1H is involved in the synthesis of D-lactic acid from pyruvic acid, which is recognized by the A domain of the first kk1B module. The pyrroline-5-carboxylate reductase kk1I is involved in the synthesis of the L-pipecolic acid residue of KK-1 from delta-1-pyrroline-5-carboxylate (P5C), a metabolic intermediate of lysine. It is still unclear how kk1C and kk1D are involved in the production of KK-1. This Curvularia clavata protein is KK-1 biosynthesis cluster protein D.